Reading from the N-terminus, the 257-residue chain is Ciliary microtubule associated protein 1B (257 aa).

STPGR repeat units lie at residues P103–R129, P182–R207, and P218–R243.

The protein belongs to the CIMAP family.

The protein localises to the cell projection. Its subcellular location is the cilium. The protein resides in the flagellum. The sequence is that of Ciliary microtubule associated protein 1B (cimap1b) from Danio rerio (Zebrafish).